The sequence spans 210 residues: Large ribosomal subunit protein uL3 (210 aa).

A disordered region spans residues Gly-131–Thr-155.

It belongs to the universal ribosomal protein uL3 family. As to quaternary structure, part of the 50S ribosomal subunit. Forms a cluster with proteins L14 and L19.

Its function is as follows. One of the primary rRNA binding proteins, it binds directly near the 3'-end of the 23S rRNA, where it nucleates assembly of the 50S subunit. The polypeptide is Large ribosomal subunit protein uL3 (Thermoanaerobacter sp. (strain X514)).